The chain runs to 139 residues: Holo-[acyl-carrier-protein] synthase (139 aa).

Residues aspartate 8 and glutamate 61 each coordinate Mg(2+).

The protein belongs to the P-Pant transferase superfamily. AcpS family. It depends on Mg(2+) as a cofactor.

It is found in the cytoplasm. It catalyses the reaction apo-[ACP] + CoA = holo-[ACP] + adenosine 3',5'-bisphosphate + H(+). Functionally, transfers the 4'-phosphopantetheine moiety from coenzyme A to a Ser of acyl-carrier-protein. The sequence is that of Holo-[acyl-carrier-protein] synthase from Bradyrhizobium sp. (strain BTAi1 / ATCC BAA-1182).